Consider the following 968-residue polypeptide: MQPKVPLGSRKQKPCSDMGDVQRAARSRGSLSAHMLLLLLASITMLLCARGAHGRPTEEDEELVLPSLERAPGHDSTTTRLRLDAFGQQLHLKLQPDSGFLAPGFTLQTVGRSPGSEAQHLDPTGDLAHCFYSGTVNGDPGSAAALSLCEGVRGAFYLQGEEFFIQPAPGVATERLAPAVPEEESSARPQFHILRRRRRGSGGAKCGVMDDETLPTSDSRPESQNTRNQWPVRDPTPQDAGKPSGPGSIRKKRFVSSPRYVETMLVADQSMADFHGSGLKHYLLTLFSVAARFYKHPSIRNSISLVVVKILVIYEEQKGPEVTSNAALTLRNFCSWQKQHNSPSDRDPEHYDTAILFTRQDLCGSHTCDTLGMADVGTVCDPSRSCSVIEDDGLQAAFTTAHELGHVFNMPHDDAKHCASLNGVSGDSHLMASMLSSLDHSQPWSPCSAYMVTSFLDNGHGECLMDKPQNPIKLPSDLPGTLYDANRQCQFTFGEESKHCPDAASTCTTLWCTGTSGGLLVCQTKHFPWADGTSCGEGKWCVSGKCVNKTDMKHFATPVHGSWGPWGPWGDCSRTCGGGVQYTMRECDNPVPKNGGKYCEGKRVRYRSCNIEDCPDNNGKTFREEQCEAHNEFSKASFGNEPTVEWTPKYAGVSPKDRCKLTCEAKGIGYFFVLQPKVVDGTPCSPDSTSVCVQGQCVKAGCDRIIDSKKKFDKCGVCGGNGSTCKKMSGIVTSTRPGYHDIVTIPAGATNIEVKHRNQRGSRNNGSFLAIRAADGTYILNGNFTLSTLEQDLTYKGTVLRYSGSSAALERIRSFSPLKEPLTIQVLMVGHALRPKIKFTYFMKKKTESFNAIPTFSEWVIEEWGECSKTCGSGWQRRVVQCRDINGHPASECAKEVKPASTRPCADLPCPHWQVGDWSPCSKTCGKGYKKRTLKCVSHDGGVLSNESCDPLKKPKHYIDFCTLTQCS.

Disordered stretches follow at residues Met1–Arg23 and Ala177–Arg253. An N-terminal signal peptide occupies residues Met1 to Cys48. Positions Ala49–Arg253 are excised as a propeptide. Residues Ala204–Asp211 carry the Cysteine switch motif. Cys206 provides a ligand contact to Zn(2+). The span at Leu214–Gln229 shows a compositional bias: polar residues. The Peptidase M12B domain maps to Arg259 to Pro468. 3 residues coordinate Ca(2+): Glu262, Asp345, and Asp352. 4 disulfides stabilise this stretch: Cys334-Cys386, Cys363-Cys368, Cys380-Cys463, and Cys418-Cys447. His402 is a Zn(2+) binding site. Glu403 is a catalytic residue. Zn(2+)-binding residues include His406 and His412. The Ca(2+) site is built by Cys463 and Asp466. In terms of domain architecture, Disintegrin spans Asp477 to Val559. Cystine bridges form between Cys489–Cys512, Cys500–Cys522, Cys507–Cys541, and Cys535–Cys546. An N-linked (GlcNAc...) asparagine glycan is attached at Asn548. Residues His560–Pro615 form the TSP type-1 1 domain. 3 disulfide bridges follow: Cys572–Cys609, Cys576–Cys614, and Cys587–Cys599. N-linked (GlcNAc...) asparagine glycosylation is found at Asn721, Asn765, and Asn783. A spacer region spans residues Lys726 to Phe850. 2 consecutive TSP type-1 domains span residues Thr855–Pro911 and His912–Ser968. N-linked (GlcNAc...) asparagine glycosylation occurs at Asn946.

Zn(2+) is required as a cofactor. In terms of processing, the precursor is cleaved by a furin endopeptidase. Glycosylated. Can be O-fucosylated by POFUT2 on a serine or a threonine residue found within the consensus sequence C1-X(2)-(S/T)-C2-G of the TSP type-1 repeat domains where C1 and C2 are the first and second cysteine residue of the repeat, respectively. Fucosylated repeats can then be further glycosylated by the addition of a beta-1,3-glucose residue by the glucosyltransferase, B3GALTL. Fucosylation mediates the efficient secretion of ADAMTS family members. Can also be C-glycosylated with one or two mannose molecules on tryptophan residues within the consensus sequence W-X-X-W of the TPRs, and N-glycosylated. These other glycosylations can also facilitate secretion.

It is found in the secreted. The protein resides in the extracellular space. Its subcellular location is the extracellular matrix. Functionally, metalloprotease which cleaves aggrecan, a cartilage proteoglycan, at the '1691-Glu-|-Leu-1692' site (within the chondroitin sulfate attachment domain), and may be involved in its turnover. Also cleaves COMP. Has angiogenic inhibitor activity. May play a critical role in follicular rupture. In Mus musculus (Mouse), this protein is A disintegrin and metalloproteinase with thrombospondin motifs 1 (Adamts1).